A 143-amino-acid polypeptide reads, in one-letter code: UPF0201 protein Pars_1985 (143 aa).

The protein belongs to the UPF0201 family.

The chain is UPF0201 protein Pars_1985 from Pyrobaculum arsenaticum (strain DSM 13514 / JCM 11321 / PZ6).